The primary structure comprises 317 residues: MAVQGSQRRLLGSLNSTPTAIPQLGLAANQTGAWCLEVSIPDGLFLSLGLVSLVENVLVVATIAKNRNLHSPMYCFICCLALSDLLVSGGNVLETAVILLLEAGALAARAAVVQQLDNVIDVITCSSMLSSLCFLGAIAVDRYISIFYALRYHSIVTLPRARRAIAAIWVASVLFSTLFIAYYDHAAVLLCLVVFFLAMLVLMAVLYVHMLARACQHAQGIARLHKRQRPVHQGFGLKGAVTLTILLGIFFLCWGPFFLHLTLIVLCPQHPTCSCIFKNFNLFLALIICNAIIDPLIYAFRSQELRRTLKEVLTCSW.

Residues 1–37 (MAVQGSQRRLLGSLNSTPTAIPQLGLAANQTGAWCLE) are Extracellular-facing. The N-linked (GlcNAc...) asparagine glycan is linked to N29. A helical membrane pass occupies residues 38-63 (VSIPDGLFLSLGLVSLVENVLVVATI). Topologically, residues 64 to 72 (AKNRNLHSP) are cytoplasmic. A helical transmembrane segment spans residues 73–93 (MYCFICCLALSDLLVSGGNVL). Over 94–118 (ETAVILLLEAGALAARAAVVQQLDN) the chain is Extracellular. A helical transmembrane segment spans residues 119 to 140 (VIDVITCSSMLSSLCFLGAIAV). Topologically, residues 141-163 (DRYISIFYALRYHSIVTLPRARR) are cytoplasmic. The helical transmembrane segment at 164–183 (AIAAIWVASVLFSTLFIAYY) threads the bilayer. Residues 184 to 191 (DHAAVLLC) are Extracellular-facing. A helical transmembrane segment spans residues 192–211 (LVVFFLAMLVLMAVLYVHML). Residues 212–240 (ARACQHAQGIARLHKRQRPVHQGFGLKGA) are Cytoplasmic-facing. A helical membrane pass occupies residues 241-266 (VTLTILLGIFFLCWGPFFLHLTLIVL). Residues 267–279 (CPQHPTCSCIFKN) lie on the Extracellular side of the membrane. The helical transmembrane segment at 280–300 (FNLFLALIICNAIIDPLIYAF) threads the bilayer. Residues 301 to 317 (RSQELRRTLKEVLTCSW) lie on the Cytoplasmic side of the membrane. A lipid anchor (S-palmitoyl cysteine) is attached at C315.

It belongs to the G-protein coupled receptor 1 family. In terms of assembly, interacts with MGRN1, but does not undergo MGRN1-mediated ubiquitination; this interaction competes with GNAS-binding and thus inhibits agonist-induced cAMP production. Interacts with OPN3; the interaction results in a decrease in MC1R-mediated cAMP signaling and ultimately a decrease in melanin production in melanocytes.

The protein localises to the cell membrane. Receptor for MSH (alpha, beta and gamma) and ACTH. The activity of this receptor is mediated by G proteins which activate adenylate cyclase. Mediates melanogenesis, the production of eumelanin (black/brown) and phaeomelanin (red/yellow), via regulation of cAMP signaling in melanocytes. This Pongo pygmaeus (Bornean orangutan) protein is Melanocyte-stimulating hormone receptor (MC1R).